Consider the following 546-residue polypeptide: Probable protein kinase UbiB (546 aa).

In terms of domain architecture, Protein kinase spans 124–502 (DFEIKPLASA…HVRQGQSRYF (379 aa)). Residues 130-138 (LASASIAQV) and Lys153 contribute to the ATP site. The active-site Proton acceptor is Asp288. Helical transmembrane passes span 501-521 (YFLG…VSRP) and 522-542 (EWGL…FVGW).

The protein belongs to the ABC1 family. UbiB subfamily.

It localises to the cell inner membrane. Its pathway is cofactor biosynthesis; ubiquinone biosynthesis [regulation]. Is probably a protein kinase regulator of UbiI activity which is involved in aerobic coenzyme Q (ubiquinone) biosynthesis. This chain is Probable protein kinase UbiB, found in Shigella sonnei (strain Ss046).